A 74-amino-acid polypeptide reads, in one-letter code: Translation initiation factor IF-1 (74 aa).

Residues 1 to 72 (MSKQDLIEME…TKGRITYRLR (72 aa)) enclose the S1-like domain.

Belongs to the IF-1 family. Component of the 30S ribosomal translation pre-initiation complex which assembles on the 30S ribosome in the order IF-2 and IF-3, IF-1 and N-formylmethionyl-tRNA(fMet); mRNA recruitment can occur at any time during PIC assembly.

The protein resides in the cytoplasm. One of the essential components for the initiation of protein synthesis. Stabilizes the binding of IF-2 and IF-3 on the 30S subunit to which N-formylmethionyl-tRNA(fMet) subsequently binds. Helps modulate mRNA selection, yielding the 30S pre-initiation complex (PIC). Upon addition of the 50S ribosomal subunit IF-1, IF-2 and IF-3 are released leaving the mature 70S translation initiation complex. The protein is Translation initiation factor IF-1 of Trichodesmium erythraeum (strain IMS101).